The chain runs to 607 residues: Terpenoid synthase 29 (607 aa).

Residues Asp-358, Asp-362, Asn-502, Thr-506, and Glu-510 each contribute to the Mg(2+) site. The short motif at Asp-358–Asp-362 is the DDXXD motif element.

Belongs to the terpene synthase family. Tpsa subfamily. Requires Mg(2+) as cofactor. Mn(2+) serves as cofactor. In terms of tissue distribution, predominantly expressed in flowers but also in siliques, roots, leaves and stems.

It localises to the cytoplasm. The protein operates within secondary metabolite biosynthesis; terpenoid biosynthesis. The chain is Terpenoid synthase 29 (TPS29) from Arabidopsis thaliana (Mouse-ear cress).